The sequence spans 204 residues: RNA-free ribonuclease P (204 aa).

This sequence belongs to the HARP family.

It catalyses the reaction Endonucleolytic cleavage of RNA, removing 5'-extranucleotides from tRNA precursor.. Functionally, RNA-free RNase P that catalyzes the removal of the 5'-leader sequence from pre-tRNA to produce the mature 5'-terminus. The sequence is that of RNA-free ribonuclease P from Ignicoccus hospitalis (strain KIN4/I / DSM 18386 / JCM 14125).